Here is a 932-residue protein sequence, read N- to C-terminus: MTEFLPFVARHIGPRHEDERAMLAALGLPSMETLITQAVPASIRLNRALNLPAALSEADALAELGTIMGRNVVKKSFIGAGYHGVHTPPVIQRNLFENPAWYTAYTPYQSEISQGRLELLFHFQTLVAELTGLPVACASLLDEATAVAEAIGVACRHHRDKRSRILLAGELHPQTVDVVNTRAEPLGWEIATGSDVDDNTAAIVVPWPDTRGVYGDFAKVIADAKAKGALVIAVADPLALTIMEAPARWGADMAVGSMQRYGVPMGFGGPHAAYLAVSEALTRIIPGRIVGQSVDAHGRAAYRLALQTREQHIRRDKATSNICTAQALLANMAAAFAIWHGPAGLQAIATRVAALAARFAAALKAAGVEIAGESLFDTVTAKVPGKAAAIAAEADKGGRLIRIIDADTVGVTFDETSTEEDLTALASLFGAKPVGGDTVLVPGKERGEGFLTQEVFHSHRSETEMMRFLRRLVDKDLALDRAMIPLGSCTMKLNAAAEMMPVSWNTVANLHPFAPAEQVQGYAKMTSDLEAWLCEITGFAGVSLQPNAGSQGEYAGLMAIRHYHQARGQGHRNICLIPSSAHGTNPASASMAGMSVVVVNCRPDGDIDIDDLKAKAEKHRDNLAAFMITYPSTYGVFEEGIKAFCEIVHDNGGQVYFDGANLNALVGLARPADIGADVCHMNLHKTFCIPHGGGGPGVGPIGVAKHLVPYLPGHVEAGSEHAVAAAQFGSASILVITWMYIRMMGGAGLKKATEAAILNANYIAHRLKGVYPILYTGAHDRVAHECIVDTRVLKDSAGITVEDVAKRLIDYGFHAPTMSWPVAGTLMIEPTESEPKLEIDRLCDAMIAIAGEAKKVADGVWPADDNPLANAPHTASDTLATEWKHPYTREEAVFPGGAFDPTAKYWPPVSRVDNVGGDRNLICSCPPVAAYG.

The residue at position 685 (Lys685) is an N6-(pyridoxal phosphate)lysine.

This sequence belongs to the GcvP family. The glycine cleavage system is composed of four proteins: P, T, L and H. Pyridoxal 5'-phosphate is required as a cofactor.

The catalysed reaction is N(6)-[(R)-lipoyl]-L-lysyl-[glycine-cleavage complex H protein] + glycine + H(+) = N(6)-[(R)-S(8)-aminomethyldihydrolipoyl]-L-lysyl-[glycine-cleavage complex H protein] + CO2. The glycine cleavage system catalyzes the degradation of glycine. The P protein binds the alpha-amino group of glycine through its pyridoxal phosphate cofactor; CO(2) is released and the remaining methylamine moiety is then transferred to the lipoamide cofactor of the H protein. This chain is Glycine dehydrogenase (decarboxylating), found in Brucella suis (strain ATCC 23445 / NCTC 10510).